The sequence spans 699 residues: Elongation factor G (699 aa).

Residues 8–283 (EHIRNIGICA…AVVDFLPSPI (276 aa)) enclose the tr-type G domain. GTP-binding positions include 17–24 (AHIDAGKT), 81–85 (DTPGH), and 135–138 (NKMD).

It belongs to the TRAFAC class translation factor GTPase superfamily. Classic translation factor GTPase family. EF-G/EF-2 subfamily.

It is found in the cytoplasm. Its function is as follows. Catalyzes the GTP-dependent ribosomal translocation step during translation elongation. During this step, the ribosome changes from the pre-translocational (PRE) to the post-translocational (POST) state as the newly formed A-site-bound peptidyl-tRNA and P-site-bound deacylated tRNA move to the P and E sites, respectively. Catalyzes the coordinated movement of the two tRNA molecules, the mRNA and conformational changes in the ribosome. This Rickettsia helvetica protein is Elongation factor G.